The following is a 664-amino-acid chain: DNA ligase (664 aa).

Residues aspartate 31–aspartate 35, serine 80–leucine 81, and glutamate 110 contribute to the NAD(+) site. Lysine 112 functions as the N6-AMP-lysine intermediate in the catalytic mechanism. The NAD(+) site is built by arginine 133 and glutamate 169. In terms of domain architecture, BRCT 1 spans leucine 237 to isoleucine 257. NAD(+) contacts are provided by lysine 284 and lysine 308. Zn(2+)-binding residues include cysteine 402, cysteine 405, cysteine 420, and cysteine 426. The region spanning asparagine 586 to glutamate 664 is the BRCT 2 domain.

Belongs to the NAD-dependent DNA ligase family. LigA subfamily. Mg(2+) serves as cofactor. The cofactor is Mn(2+).

The enzyme catalyses NAD(+) + (deoxyribonucleotide)n-3'-hydroxyl + 5'-phospho-(deoxyribonucleotide)m = (deoxyribonucleotide)n+m + AMP + beta-nicotinamide D-nucleotide.. Functionally, DNA ligase that catalyzes the formation of phosphodiester linkages between 5'-phosphoryl and 3'-hydroxyl groups in double-stranded DNA using NAD as a coenzyme and as the energy source for the reaction. It is essential for DNA replication and repair of damaged DNA. The protein is DNA ligase of Christiangramia forsetii (strain DSM 17595 / CGMCC 1.15422 / KT0803) (Gramella forsetii).